The chain runs to 269 residues: Phosphate import ATP-binding protein PstB 1 (269 aa).

Residues 23 to 264 enclose the ABC transporter domain; the sequence is LSTEDLNVYY…PKIKAAEDYV (242 aa). Position 55-62 (55-62) interacts with ATP; it reads GASGSGKS.

This sequence belongs to the ABC transporter superfamily. Phosphate importer (TC 3.A.1.7) family. The complex is composed of two ATP-binding proteins (PstB), two transmembrane proteins (PstC and PstA) and a solute-binding protein (PstS).

The protein resides in the cell membrane. It catalyses the reaction phosphate(out) + ATP + H2O = ADP + 2 phosphate(in) + H(+). In terms of biological role, part of the ABC transporter complex PstSACB involved in phosphate import. Responsible for energy coupling to the transport system. The sequence is that of Phosphate import ATP-binding protein PstB 1 from Latilactobacillus sakei subsp. sakei (strain 23K) (Lactobacillus sakei subsp. sakei).